Consider the following 644-residue polypeptide: (E2-independent) E3 ubiquitin-conjugating enzyme FATS (644 aa).

A required for interaction with p53/TP53 region spans residues 1-67; the sequence is MISPVVISRL…LGILTPSDDQ (67 aa). 4 disordered regions span residues 62–83, 305–349, 367–413, and 475–507; these read TPSD…LGKG, LGSG…SSHT, VLSG…SILS, and NEDP…EDSY. A required for interaction with HDAC1 region spans residues 67–175; the sequence is QGLETEPLST…RLSARQDYWV (109 aa). Positions 398-410 are enriched in low complexity; the sequence is EGDSSPSSDGQPS. A compositionally biased stretch (pro residues) spans 481–492; it reads TPEPSPATPSPS. The interval 516 to 644 is ALMS motif; sequence TLQEALEVHR…LDQLLQRNAV (129 aa). Residues 598 to 629 adopt a coiled-coil conformation; sequence KRIYNNLPEVKKKKEEQKKRMILQSNRLRAEV.

As to quaternary structure, interacts with HDAC1; the interaction prevents binding of HDAC1 to CDKN1A/p21 and facilitates the acetylation and stabilization of CDKN1A/p21. Interacts with p53/TP53; the interaction inhibits binding of p53/TP53 and MDM2. In terms of tissue distribution, highly expressed in testis. Weak expression found in brain, lung, heart, ovary, thymus, spleen and kidney.

It localises to the cytoplasm. The protein resides in the cytoskeleton. The protein localises to the microtubule organizing center. It is found in the centrosome. Its function is as follows. Tumor suppressor that is required to sustain G2/M checkpoint after DNA damage. Acts as a p53/TP53 activator by inhibiting MDM2 binding to p53/TP53 and stimulating non-proteolytic polyubiquitination of p53/TP53. Exhibits ubiquitin ligase (E3) activity and assemble ubiquitin polymers through 'Lys-11'- (K11-), 'Lys-29'- (K29-) and 'Lys-63'- (K63)-linkages, independently of the ubiquitin-conjugating enzyme (E2). Promotes p53/TP53-dependent transcription of CDKN1A/p21, leading to robust checkpoint response. Mediates CDKN1A/p21 protein stability in a ubiquitin-independent manner. Interacts with HDAC1 and prevents binding of HDAC1 to CDKN1A/p21 and facilitates the acetylation and stabilization of CDKN1A/p21. May have a role in the assembly of primary cilia. The chain is (E2-independent) E3 ubiquitin-conjugating enzyme FATS from Mus musculus (Mouse).